The chain runs to 717 residues: MLQTSKGSNSSSTSSSRSASISTATPNTIVEDEELLCGPKSELTPPAVANPLRPVSKSNTSVEDDSKPSFTYDLDVFNLCKEYLNTRNHHGLALIARQKGIPPILRFKVWPILLKSHPFVISPFIQPDSELLNESTSSRSNSSSSSSTGSNTPLSTAPGSIKDAAIIDGDANDNDNDSNSNSNDDDNDRDNNDANTKEKEEDEQNNKIREKIKRDLAKYIQRLKYSQSKYTVSETEHEILSILENAIMKFTLKWGKIIKYDSSLTWIALNLAEWFPPIPKTPWVLVGKEYSSSHQSLIVNFLDDYSNYIDNIPDLREYLERLIYHDEKISTISFREVYERLVLVLLHCPQPVSRRKKSDNQGQNQRRNQSEVQKDQQSFKVNKTTLPKTGGTIEERVSYFIYCLRKLIPELSQYFHEEQILTKFGCLDDEWLIWWLKFCGTKVWSKYDRGRIWDFMLGWRLKNPKRDFNYYYEKLNYVNRNTLEKLGPDIFWSVGNEEEDISGDNNVDANANEINNTEKTETGKLVKREGDIKRSSFKDLVNELSNELHISKRVSTDEVATSTSSPATTKMASSSSTSSTLTPNVSIPFSRVDPHVALIFISLSLLKSKENILVELDQHEIRQFLSRLPSKSYKYNQKRSTRQKRISYASNASSTSNSPMGQSPVDRDEDSIFPTSRIVISNDSKDQKHKVNFIDNIISEAGELWRKWLWSEMVEDN.

Composition is skewed to low complexity over residues 1–25 (MLQT…STAT) and 132–155 (LNES…TPLS). Disordered regions lie at residues 1-66 (MLQT…EDDS), 132-209 (LNES…NKIR), 353-377 (SRRK…KDQQ), 503-522 (GDNN…KTET), 555-583 (STDE…TLTP), and 636-670 (NQKR…RDED). The Rab-GAP TBC domain occupies 100–460 (GIPPILRFKV…RIWDFMLGWR (361 aa)). Residues 189-209 (RDNNDANTKEKEEDEQNNKIR) show a composition bias toward basic and acidic residues. 2 stretches are compositionally biased toward low complexity: residues 504-515 (DNNVDANANEIN) and 560-582 (ATST…STLT). The span at 636 to 645 (NQKRSTRQKR) shows a compositional bias: basic residues. Residues 647–658 (SYASNASSTSNS) show a composition bias toward low complexity.

Belongs to the OCA5 family.

Its subcellular location is the cytoplasm. The sequence is that of Oxidant-induced cell-cycle arrest protein 5 (OCA5) from Candida albicans (strain WO-1) (Yeast).